A 717-amino-acid polypeptide reads, in one-letter code: MKEFFATCPKGLENLLAVELTNLGAEQVRETVAGVHFKGELAIGYKACLWSRFASRIVLVLSEFQMNDDLDLYLGAHTIPWEEHFSGTSTIAVDFTGTNPAIRNTQYGALKIKDAIVDRFTKRGHVRPDVDKKSPDIRIMAHLGKGKANITLDLSGPALHQRFYRQGTGEAPLKENLAAAMIARSGWAGEPMMDPMCGSGTLLVEAAFIAADMAPALRRERFGFDRWLQHDSELWQSLLMEAQVRAKRGMQRCEVKLFGCDADSRVLLKARDNAKAAGVAHLITFKQADVTALENPLPMPAPVEGEEGQGEARQVGMLISNPPYGERLGEFPALLEVHQALGDALRRSFQGWKVSILSASPELLSCLRLRADKQYRLFNGALECQLRNYQIAQDSVASQKEVAQDFANRLRKNLKTLEKWAQKENLDCYRLYDADLPEYNAAIDRYQDYLVVQEYAAPKDIPAQKTRQRLLDMVQAAIKVTGMDGEKVILKVRERQEGKQQYQKLSEEQHRMEVQEYGARLWVNLYDYLDTGLFLDHRQTRRMLGQMAKGKRFLNLFAYTGSATVHAGLGGASETTTVDMSRTYLNWAQDNMRLNSLVGREHKFVQADCLKWLSEADDQYDLIFIDPPTFSNSKRMDESFDVQRDHLLLMQHLKRLLAAGGTLVFSNNKRHFKMDLAGLEAIGLKAQNITGKTRPKDFERNQHIHNCWIITHAEAQA.

The region spanning 43–154 (IGYKACLWSR…KGKANITLDL (112 aa)) is the THUMP domain.

This sequence belongs to the methyltransferase superfamily. RlmKL family.

It is found in the cytoplasm. The catalysed reaction is guanosine(2445) in 23S rRNA + S-adenosyl-L-methionine = N(2)-methylguanosine(2445) in 23S rRNA + S-adenosyl-L-homocysteine + H(+). It catalyses the reaction guanosine(2069) in 23S rRNA + S-adenosyl-L-methionine = N(2)-methylguanosine(2069) in 23S rRNA + S-adenosyl-L-homocysteine + H(+). Its function is as follows. Specifically methylates the guanine in position 2445 (m2G2445) and the guanine in position 2069 (m7G2069) of 23S rRNA. This is Ribosomal RNA large subunit methyltransferase K/L from Aeromonas hydrophila subsp. hydrophila (strain ATCC 7966 / DSM 30187 / BCRC 13018 / CCUG 14551 / JCM 1027 / KCTC 2358 / NCIMB 9240 / NCTC 8049).